Reading from the N-terminus, the 335-residue chain is Pro-cathepsin H (335 aa).

A signal peptide spans 1-22 (MWAVLSLLCAGAWLLGPPACGA). A propeptide spanning residues 23 to 97 (SNLAVSSFEK…DEIRHKYLWS (75 aa)) is cleaved from the precursor. 2 N-linked (GlcNAc...) asparagine glycosylation sites follow: Asn-72 and Asn-101. 4 disulfides stabilise this stretch: Cys-102–Cys-327, Cys-138–Cys-181, Cys-172–Cys-214, and Cys-272–Cys-322. The propeptide occupies 107–115 (GNYLRGTGP). Residue Cys-141 is part of the active site. N-linked (GlcNAc...) asparagine glycosylation is present at Asn-230. Residues His-281 and Asn-301 contribute to the active site.

It belongs to the peptidase C1 family. As to quaternary structure, composed of cathepsin H and mini chain; disulfide-linked. Cathepsin H may be split into heavy and light chain. All chains are held together by disulfide bonds.

The protein resides in the lysosome. It catalyses the reaction Hydrolysis of proteins, acting as an aminopeptidase (notably, cleaving Arg-|-Xaa bonds) as well as an endopeptidase.. In terms of biological role, important for the overall degradation of proteins in lysosomes. The protein is Pro-cathepsin H (CTSH) of Sus scrofa (Pig).